Consider the following 364-residue polypeptide: Threonine-phosphate decarboxylase (364 aa).

O-phospho-L-threonine is bound by residues 8–9, N32, and N157; that span reads HG. N6-(pyridoxal phosphate)lysine is present on K216. O-phospho-L-threonine-binding residues include R323 and R337.

Belongs to the class-II pyridoxal-phosphate-dependent aminotransferase family. As to quaternary structure, homodimer. Pyridoxal 5'-phosphate serves as cofactor.

It carries out the reaction O-phospho-L-threonine + H(+) = (R)-1-aminopropan-2-yl phosphate + CO2. The protein operates within cofactor biosynthesis; adenosylcobalamin biosynthesis. Decarboxylates L-threonine-O-3-phosphate to yield (R)-1-amino-2-propanol O-2-phosphate, the precursor for the linkage between the nucleotide loop and the corrin ring in cobalamin. This is Threonine-phosphate decarboxylase (cobD) from Salmonella typhimurium (strain LT2 / SGSC1412 / ATCC 700720).